We begin with the raw amino-acid sequence, 117 residues long: Large ribosomal subunit protein bL20c (117 aa).

It belongs to the bacterial ribosomal protein bL20 family.

The protein localises to the plastid. It is found in the chloroplast. Its function is as follows. Binds directly to 23S ribosomal RNA and is necessary for the in vitro assembly process of the 50S ribosomal subunit. It is not involved in the protein synthesizing functions of that subunit. This Lobularia maritima (Sweet alyssum) protein is Large ribosomal subunit protein bL20c.